A 193-amino-acid polypeptide reads, in one-letter code: Translocation protein SEC72 (193 aa).

In terms of assembly, component of the heterotetrameric Sec62/63complex composed of SEC62, SEC63, SEC71 and SEC72. The Sec62/63 complex associates with the Sec61 complex to form the Sec complex. May interact with protein YLR301W. Part of a complex consisting of KAR2, SEC63, SEC66 and SEC72.

It is found in the cytoplasm. Acts as a non-essential component of the Sec62/63 complex which is involved in SRP-independent post-translational translocation across the endoplasmic reticulum (ER) and functions together with the Sec61 complex and KAR2 in a channel-forming translocon complex. A cycle of assembly and disassembly of Sec62/63 complex from SEC61 may govern the activity of the translocon. SEC72 may be involved in signal peptide recognition for a defined subset of leader peptides, or may increase the efficiency of unusual or 'difficult' secretory precursors to the translocation pore, it may be that this protein binds charged leader peptides to the membrane until they engage the translocation apparatus. This chain is Translocation protein SEC72 (SEC72), found in Saccharomyces cerevisiae (strain ATCC 204508 / S288c) (Baker's yeast).